The following is a 249-amino-acid chain: Tumor necrosis factor ligand superfamily member 12 (249 aa).

The Cytoplasmic segment spans residues 1–21; it reads MAARRSQRRRGRRGEPGTALL. The helical; Signal-anchor for type II membrane protein transmembrane segment at 22 to 45 threads the bilayer; sequence APLVLSLGLALACLGLLLVVVSLG. Topologically, residues 46–249 are extracellular; the sequence is SWATLSAQEP…LTYFGLFQVH (204 aa). A disordered region spans residues 52–78; sequence AQEPSQEELTAEDRREPPELNPQTEES. The THD domain occupies 107–248; sequence IAAHYEVHPR…FLTYFGLFQV (142 aa). A glycan (N-linked (GlcNAc...) asparagine) is linked at Asn139. A disulfide bridge links Cys191 with Cys210.

Belongs to the tumor necrosis factor family. In terms of assembly, homotrimer. Interacts with the angiogenic factor AGGF1/VG5Q. In terms of processing, the soluble form is produced from the membrane form by proteolytic processing. Widely expressed.

The protein localises to the cell membrane. The protein resides in the secreted. Binds to FN14 and possibly also to TNRFSF12/APO3. Weak inducer of apoptosis in some cell types. Mediates NF-kappa-B activation. Promotes angiogenesis and the proliferation of endothelial cells. Also involved in induction of inflammatory cytokines. Promotes IL8 secretion. This chain is Tumor necrosis factor ligand superfamily member 12 (Tnfsf12), found in Mus musculus (Mouse).